A 408-amino-acid chain; its full sequence is MKMQTKKLFITIVSFLLYAPLFLSSPVPDPESVVEEVHKSINASVAGRRKLGYLSCTTGNPIDDCWRCDPHWEQHRQRLADCAIGFGKNAIGGRDGRIYVVTDSGNDNPVSPKPGTLRHAVVQDEPLWIIFQRDMTIQLKEELIMNSFKTIDGRGASVHISGGPCITIQYVTNIIIHGIHIHDCKQGGNAMVRSSPRHFGWRTISDGDGVSIFGGSHVWVDHCSFSNCEDGLIDAIMGSTAITLSNNHMTHHDKVMLLGHSDTYSRDKNMQVTIAFNHFGEGLVQRMPRCRHGYFHVVNNDYTHWEMYAIGGSANPTINSQGNRFLAPNIRFSKEVTKHEDAPESEWKRWNWRSSGDLLLNGAFFTPSGGAASSSYAKASSLGAKPSSLVGPLTSTSGALNCRKGSRC.

Residues 1–24 (MKMQTKKLFITIVSFLLYAPLFLS) form the signal peptide. N-linked (GlcNAc...) asparagine glycosylation is present at asparagine 42. The Ca(2+) site is built by aspartate 206, aspartate 230, and aspartate 234. Arginine 286 is a catalytic residue.

This sequence belongs to the polysaccharide lyase 1 family. Ca(2+) is required as a cofactor. Expressed in flowers, but not in leaves.

It catalyses the reaction Eliminative cleavage of (1-&gt;4)-alpha-D-galacturonan to give oligosaccharides with 4-deoxy-alpha-D-galact-4-enuronosyl groups at their non-reducing ends.. Its pathway is glycan metabolism; pectin degradation; 2-dehydro-3-deoxy-D-gluconate from pectin: step 2/5. This Arabidopsis thaliana (Mouse-ear cress) protein is Probable pectate lyase 18.